The chain runs to 282 residues: Pantothenate synthetase (282 aa).

30–37 (MGNLHQGH) is an ATP binding site. Histidine 37 acts as the Proton donor in catalysis. Glutamine 61 contributes to the (R)-pantoate binding site. Glutamine 61 serves as a coordination point for beta-alanine. Residue 149–152 (GKKD) coordinates ATP. Position 155 (glutamine 155) interacts with (R)-pantoate. Residues isoleucine 178 and 186–189 (MSSR) contribute to the ATP site.

It belongs to the pantothenate synthetase family. As to quaternary structure, homodimer.

Its subcellular location is the cytoplasm. The enzyme catalyses (R)-pantoate + beta-alanine + ATP = (R)-pantothenate + AMP + diphosphate + H(+). It participates in cofactor biosynthesis; (R)-pantothenate biosynthesis; (R)-pantothenate from (R)-pantoate and beta-alanine: step 1/1. In terms of biological role, catalyzes the condensation of pantoate with beta-alanine in an ATP-dependent reaction via a pantoyl-adenylate intermediate. The protein is Pantothenate synthetase of Shewanella loihica (strain ATCC BAA-1088 / PV-4).